The primary structure comprises 115 residues: MDKRSLYDGLNSLETDLDSSVTQLREIKAALHELVEKNTTLEIENQRLREHLQELNKLAGNTTETEKQELSKSRMNLEKLYEEGFHVCNILYGSRRENDEECAFCLDVIYGERTR.

Zn(2+) is bound by residues H86, C88, C102, and C105.

Belongs to the YabA family. In terms of assembly, homotetramer. Interacts with both DnaA and DnaN, acting as a bridge between these two proteins. Zn(2+) is required as a cofactor.

Its subcellular location is the cytoplasm. It is found in the nucleoid. In terms of biological role, involved in control of chromosome replication initiation. Inhibits the cooperative binding of DnaA to the oriC region, thus negatively regulating initiation of chromosome replication. Inhibits the ability of DnaA-ATP to form a helix on DNA; does not disassemble preformed DnaA-DNA helices. Decreases the residence time of DnaA on the chromosome at its binding sites (oriC, replication forks and promoter-binding sites). Tethers DnaA to the replication machinery via the DNA polymerase beta sliding clamp subunit (dnaN). Associates with oriC and other DnaA targets on the chromosome in a DnaA-dependent manner. This Enterococcus faecalis (strain ATCC 700802 / V583) protein is Replication initiation control protein YabA.